We begin with the raw amino-acid sequence, 494 residues long: Transcriptional regulator of yeast form adherence 3 (494 aa).

Residues 1-360 (MKFAKTLERT…SLGIQKTFPK (360 aa)) form the SPX domain. Residues 398–437 (CPICMNIAYKPIRLSCGHLFCVRCLVKMKQDDKTSCPLCR) form an RING-type zinc finger.

Its subcellular location is the nucleus. Its function is as follows. Transcription factor required for yeast cell adherence to silicone substrate. The sequence is that of Transcriptional regulator of yeast form adherence 3 (TRY3) from Candida albicans (strain SC5314 / ATCC MYA-2876) (Yeast).